The primary structure comprises 317 residues: MTDKLTSLRQYTTVVADTGDIAAMKLYQPQDATTNPSLILNAAQIPEYRKLIDDAVAWAKQQSNDRAQQIVDATDKLAVNIGLEILKLVPGRISTEVDARLSYDTEASIAKAKRLIKLYNDAGISNDRILIKLASTWQGIRAAEQLEKEGINCNLTLLFSFAQARACAEAGVFLISPFVGRILDWYKANTDKKEYAPAEDPGVVSVSEIYQYYKEHGYETVVMGASFRNIGEILELAGCDRLTIAPTLLKELAESEGAIERKLSYTGEVKARPARITESEFLWQHNQDPMAVDKLAEGIRKFAIDQEKLEKMIGDLL.

The active-site Schiff-base intermediate with substrate is lysine 132.

The protein belongs to the transaldolase family. Type 1 subfamily. Homodimer.

The protein localises to the cytoplasm. It carries out the reaction D-sedoheptulose 7-phosphate + D-glyceraldehyde 3-phosphate = D-erythrose 4-phosphate + beta-D-fructose 6-phosphate. It participates in carbohydrate degradation; pentose phosphate pathway; D-glyceraldehyde 3-phosphate and beta-D-fructose 6-phosphate from D-ribose 5-phosphate and D-xylulose 5-phosphate (non-oxidative stage): step 2/3. Functionally, transaldolase is important for the balance of metabolites in the pentose-phosphate pathway. This chain is Transaldolase (talB), found in Escherichia coli O104:H4 (strain 2009EL-2071).